The primary structure comprises 347 residues: NADH-ubiquinone oxidoreductase chain 2 (347 aa).

Transmembrane regions (helical) follow at residues 3–23, 25–45, 59–79, 96–116, 122–142, 145–165, 178–198, 202–222, 240–260, 276–296, and 326–346; these read PLIF…VMIS, HWLM…PVLM, YFLT…INLL, IIMT…FWVP, VSLT…LSVL, IAPV…IMIG, ILAY…IFNP, LLNL…FMTV, ITTS…LTGF, IILA…YMRL, and LSPL…MMIL.

It belongs to the complex I subunit 2 family. In terms of assembly, core subunit of respiratory chain NADH dehydrogenase (Complex I) which is composed of 45 different subunits. Interacts with TMEM242.

It localises to the mitochondrion inner membrane. It carries out the reaction a ubiquinone + NADH + 5 H(+)(in) = a ubiquinol + NAD(+) + 4 H(+)(out). Functionally, core subunit of the mitochondrial membrane respiratory chain NADH dehydrogenase (Complex I) which catalyzes electron transfer from NADH through the respiratory chain, using ubiquinone as an electron acceptor. Essential for the catalytic activity and assembly of complex I. The chain is NADH-ubiquinone oxidoreductase chain 2 from Peropteryx macrotis (Lesser dog-like bat).